Consider the following 59-residue polypeptide: Large ribosomal subunit protein bL32 (59 aa).

Residues 1–16 (MAVPKRKTSPSRRGMR) show a composition bias toward basic residues. The disordered stretch occupies residues 1–20 (MAVPKRKTSPSRRGMRRSHD).

The protein belongs to the bacterial ribosomal protein bL32 family.

The protein is Large ribosomal subunit protein bL32 of Novosphingobium aromaticivorans (strain ATCC 700278 / DSM 12444 / CCUG 56034 / CIP 105152 / NBRC 16084 / F199).